Reading from the N-terminus, the 194-residue chain is Ribonuclease HII (194 aa).

One can recognise an RNase H type-2 domain in the interval 3–193; it reads ILTAGVDEAG…VRNLLAQQAL (191 aa). A divalent metal cation contacts are provided by D9, E10, and D101.

This sequence belongs to the RNase HII family. Requires Mn(2+) as cofactor. The cofactor is Mg(2+).

The protein resides in the cytoplasm. The enzyme catalyses Endonucleolytic cleavage to 5'-phosphomonoester.. Endonuclease that specifically degrades the RNA of RNA-DNA hybrids. This chain is Ribonuclease HII (rnhB), found in Neisseria meningitidis serogroup A / serotype 4A (strain DSM 15465 / Z2491).